A 185-amino-acid chain; its full sequence is MINEIRKDAETRMDKCVESFKGNISKIRTGRAHPNLLDGIQVEYYGTATPLRQLANIVAEDSRTLALTVFDRSMSGAIEKAILTSDLGLNPASAGTVIRVPLPPLTEERRKDLIKLVRSEAESGRVSVRNVRRDANDKVKALLKDKEISEDEDRKSQEEIQKITDLMIKKIDAALADKEKELMDF.

The protein belongs to the RRF family.

Its subcellular location is the cytoplasm. Responsible for the release of ribosomes from messenger RNA at the termination of protein biosynthesis. May increase the efficiency of translation by recycling ribosomes from one round of translation to another. This is Ribosome-recycling factor from Edwardsiella ictaluri (strain 93-146).